A 181-amino-acid polypeptide reads, in one-letter code: ATP-dependent protease subunit HslV (181 aa).

Thr7 is a catalytic residue. Ala166, Cys169, and Thr172 together coordinate Na(+).

This sequence belongs to the peptidase T1B family. HslV subfamily. In terms of assembly, a double ring-shaped homohexamer of HslV is capped on each side by a ring-shaped HslU homohexamer. The assembly of the HslU/HslV complex is dependent on binding of ATP.

The protein resides in the cytoplasm. It catalyses the reaction ATP-dependent cleavage of peptide bonds with broad specificity.. Its activity is regulated as follows. Allosterically activated by HslU binding. Its function is as follows. Protease subunit of a proteasome-like degradation complex believed to be a general protein degrading machinery. The sequence is that of ATP-dependent protease subunit HslV from Anaeromyxobacter dehalogenans (strain 2CP-1 / ATCC BAA-258).